The primary structure comprises 535 residues: Probable monogalactosyldiacylglycerol synthase, chloroplastic (535 aa).

Residues 1–113 (MMQHSSSVTQ…KIPLGFASVG (113 aa)) constitute a chloroplast transit peptide.

It belongs to the glycosyltransferase 28 family.

The protein localises to the plastid. The protein resides in the chloroplast membrane. The enzyme catalyses a 1,2-diacyl-sn-glycerol + UDP-alpha-D-galactose = a 1,2-diacyl-3-O-(beta-D-galactosyl)-sn-glycerol + UDP + H(+). Functionally, involved in the synthesis of the major structural component of photosynthetic membranes. This is Probable monogalactosyldiacylglycerol synthase, chloroplastic (MGD A) from Nicotiana tabacum (Common tobacco).